The chain runs to 163 residues: Ribosome maturation factor RimM (163 aa).

The PRC barrel domain maps to 94 to 162; sequence ADEYYYIDLI…DHLVIAADFI (69 aa).

This sequence belongs to the RimM family. As to quaternary structure, binds ribosomal protein uS19.

The protein localises to the cytoplasm. Its function is as follows. An accessory protein needed during the final step in the assembly of 30S ribosomal subunit, possibly for assembly of the head region. Essential for efficient processing of 16S rRNA. May be needed both before and after RbfA during the maturation of 16S rRNA. It has affinity for free ribosomal 30S subunits but not for 70S ribosomes. The protein is Ribosome maturation factor RimM of Zymomonas mobilis subsp. mobilis (strain ATCC 31821 / ZM4 / CP4).